Here is a 421-residue protein sequence, read N- to C-terminus: Serine hydroxymethyltransferase (421 aa).

(6S)-5,6,7,8-tetrahydrofolate is bound by residues leucine 123 and 127 to 129 (GHL). Position 232 is an N6-(pyridoxal phosphate)lysine (lysine 232).

The protein belongs to the SHMT family. In terms of assembly, homodimer. Pyridoxal 5'-phosphate serves as cofactor.

It localises to the cytoplasm. It carries out the reaction (6R)-5,10-methylene-5,6,7,8-tetrahydrofolate + glycine + H2O = (6S)-5,6,7,8-tetrahydrofolate + L-serine. It participates in one-carbon metabolism; tetrahydrofolate interconversion. It functions in the pathway amino-acid biosynthesis; glycine biosynthesis; glycine from L-serine: step 1/1. Functionally, catalyzes the reversible interconversion of serine and glycine with tetrahydrofolate (THF) serving as the one-carbon carrier. This reaction serves as the major source of one-carbon groups required for the biosynthesis of purines, thymidylate, methionine, and other important biomolecules. Also exhibits THF-independent aldolase activity toward beta-hydroxyamino acids, producing glycine and aldehydes, via a retro-aldol mechanism. The protein is Serine hydroxymethyltransferase of Ehrlichia ruminantium (strain Gardel).